The sequence spans 207 residues: LexA repressor (207 aa).

A DNA-binding region (H-T-H motif) is located at residues 33 to 52 (VKEMSETFGISHASVHDRIN). Catalysis depends on for autocatalytic cleavage activity residues Ser129 and Lys166.

This sequence belongs to the peptidase S24 family. In terms of assembly, homodimer.

It carries out the reaction Hydrolysis of Ala-|-Gly bond in repressor LexA.. Its function is as follows. Represses a number of genes involved in the response to DNA damage (SOS response), including recA and lexA. In the presence of single-stranded DNA, RecA interacts with LexA causing an autocatalytic cleavage which disrupts the DNA-binding part of LexA, leading to derepression of the SOS regulon and eventually DNA repair. The sequence is that of LexA repressor from Oleidesulfovibrio alaskensis (strain ATCC BAA-1058 / DSM 17464 / G20) (Desulfovibrio alaskensis).